The sequence spans 831 residues: MKQDLISSVQIILFLPLTTVGLAGQSFPGKPKIIRCRSLEKETFSCWWKPGSDGGLPTNYTLFYSKDSEEEIYECPDYRTSGPNSCYFNKNHTSPWTTFNITVTATNEIGSNSSDPQYVDVTSIVQPGSPVNLTLETKRSANIMYLWAKWSPPLLADASSNHLYHYELRIKPEEKEEWETISVGVQTQCKINRLNAGMRYVVQVRCTLDPGEWSEWSSERHILIPSGQSPPEKPTIIKCRSPEKETFTCWWKPGLDGGHPTNYTLLYSKEGEEQVYECPDYRTAGPNSCYFDKKHTSFWTIYNITVRATNEMGSNSSDPHYVDVTYIVQPDPPVNVTLELKKPINRKPYLVLTWSPPPLADVRSGWLTLEYELRLKPEEGEEWETIFVGQQTQYKMFSLNPGKKYIIQIHCKPDHHGSWSEWSSENYIQIPNDFRVKDMIVWIVLGVLSSLICLIMSWTMVLKGYRMITFMLPPVPGPKIKGIDTHLLETGKSEELLSALGCHGLPPTSDCEELLIEYLEVEDSEDQQLMPSHDNGHPSKNAKITRKETDSDSGRGSCDSPSLLSEKCRETCALPPVLQTQEVRDVQEKKAAKRSWETQYVASERKALLSNSESAKSSTWPAVQLPNSQPPMFAYHSIVDAHKITLNTTNTNVAAVLVEDEEEHQSQCSLTETIPGEMEKQGEMENLHSKTEQTTAQVKQNRSNERLPFLDAALMDYVEVHKVIRQDEEPAVLLKHKENSGKIEKYTISGASKEYTKVSTVMDHNILVLMPDSRVPHTPASQEPAKETSQSLQQGQVEKNMSYCLTAPSDCKRETGGSEYMDPSSFMPSFK.

Positions methionine 1–alanine 23 are cleaved as a signal peptide. Residues glycine 24–aspartate 438 lie on the Extracellular side of the membrane. Fibronectin type-III domains are found at residues lysine 30 to glycine 128, serine 129 to glycine 227, proline 230 to aspartate 331, and proline 332 to aspartate 433. Cysteine 36 and cysteine 46 form a disulfide bridge. A glycan (N-linked (GlcNAc...) asparagine) is linked at asparagine 59. The cysteines at positions 75 and 86 are disulfide-linked. N-linked (GlcNAc...) asparagine glycans are attached at residues asparagine 91, asparagine 100, asparagine 112, asparagine 132, asparagine 262, asparagine 303, asparagine 315, and asparagine 335. The Zn(2+) site is built by aspartate 414 and histidine 416. The WSXWS motif signature appears at tryptophan 419 to serine 423. Residues methionine 439–threonine 459 form a helical membrane-spanning segment. Over methionine 460–lysine 831 the chain is Cytoplasmic. Residues methionine 471–lysine 479 carry the Box 1 motif motif. Disordered stretches follow at residues glutamine 527–leucine 563, arginine 774–glutamine 796, and proline 808–lysine 831. Polar residues predominate over residues glutamate 787–glutamine 796.

The protein belongs to the type I cytokine receptor family. Type 1 subfamily.

Its subcellular location is the membrane. In terms of biological role, this is a receptor for the anterior pituitary hormone prolactin. The sequence is that of Prolactin receptor (PRLR) from Gallus gallus (Chicken).